Reading from the N-terminus, the 671-residue chain is Amidase chry2 (671 aa).

Cys-2 acts as the Nucleophile in catalysis. Residues 2–220 (CGISAFITHP…PGHYLICRPN (219 aa)) form the Glutamine amidotransferase type-2 domain. One can recognise an Asparagine synthetase domain in the interval 251–639 (VRERLLEAVR…TQDAMDGAFN (389 aa)).

Belongs to the asparagine synthetase family.

Its pathway is pigment biosynthesis. Functionally, amidase; part of the gene cluster that mediates the biosynthesis of the yellow pigment chrysogine. Pyruvic acid and anthranilic acid are likely substrates for the nonribosomal peptide synthetase chry1/NRPS14, with pyruvic acid adenylated by the first A domain and anthranilic acid by the second. If pyruvic acid and anthranilic acid are merged and released from chry1/NRPS14 by hydrolysis, a subsequent amidation would lead to 2-pyruvoylaminobenzamide. This process is probably catalyzed by the amidotransferase chry2 using glutamine as amino donor. The dehydrogenase chry5 that has a terminal berberine bridge domain for C-N cyclization could catalyze the cyclization of 2-pyruvoylaminobenzamide to yield acetyl-4(3H)-quinazolidinone. A final reduction of acetyl-4(3H)-quinazolidinone catalyzed by the oxidoreductase chry4 would result in chrysogine. This is Amidase chry2 from Gibberella zeae (strain ATCC MYA-4620 / CBS 123657 / FGSC 9075 / NRRL 31084 / PH-1) (Wheat head blight fungus).